The following is a 453-amino-acid chain: Acyl-coenzyme A thioesterase 2, mitochondrial (453 aa).

The N-terminal 42 residues, 1-42 (MVASSFAVLRASRLCQWGWKSWTQLSGPPPLSTGGRTTFART), are a transit peptide targeting the mitochondrion. At Lys-83 the chain carries N6-acetyllysine. Active-site charge relay system residues include Ser-273, Asp-365, and His-399. At Lys-447 the chain carries N6-succinyllysine.

It belongs to the C/M/P thioester hydrolase family. As to quaternary structure, monomer. Post-translationally, the N-terminus is blocked. Constitutively expressed in heart and brown fat. Strongly induced in liver, and weakly in kidney, in peroxisome proliferator treated rat.

It is found in the mitochondrion matrix. The enzyme catalyses hexadecanoyl-CoA + H2O = hexadecanoate + CoA + H(+). The catalysed reaction is tetradecanoyl-CoA + H2O = tetradecanoate + CoA + H(+). It catalyses the reaction octadecanoyl-CoA + H2O = octadecanoate + CoA + H(+). It carries out the reaction eicosanoyl-CoA + H2O = eicosanoate + CoA + H(+). The enzyme catalyses decanoyl-CoA + H2O = decanoate + CoA + H(+). The catalysed reaction is dodecanoyl-CoA + H2O = dodecanoate + CoA + H(+). It catalyses the reaction (9Z)-octadecenoyl-CoA + H2O = (9Z)-octadecenoate + CoA + H(+). It carries out the reaction (9Z)-hexadecenoyl-CoA + H2O = (9Z)-hexadecenoate + CoA + H(+). The enzyme catalyses (9E)-octadecenoyl-CoA + H2O = (9E)-octadecenoate + CoA + H(+). The catalysed reaction is (9Z,12Z)-octadecadienoyl-CoA + H2O = (9Z,12Z)-octadecadienoate + CoA + H(+). It participates in lipid metabolism; fatty acid metabolism. In terms of biological role, catalyzes the hydrolysis of acyl-CoAs into free fatty acids and coenzyme A (CoASH), regulating their respective intracellular levels. Displays higher activity toward long chain acyl CoAs (C14-C20). The enzyme is involved in enhancing the hepatic fatty acid oxidation in mitochondria. This chain is Acyl-coenzyme A thioesterase 2, mitochondrial (Acot2), found in Rattus norvegicus (Rat).